Reading from the N-terminus, the 206-residue chain is Dephospho-CoA kinase (206 aa).

The region spanning 4–200 (TVALTGGIGS…ASYLKLASQF (197 aa)) is the DPCK domain. 12–17 (GSGKST) contributes to the ATP binding site.

This sequence belongs to the CoaE family.

It localises to the cytoplasm. The catalysed reaction is 3'-dephospho-CoA + ATP = ADP + CoA + H(+). It participates in cofactor biosynthesis; coenzyme A biosynthesis; CoA from (R)-pantothenate: step 5/5. Its function is as follows. Catalyzes the phosphorylation of the 3'-hydroxyl group of dephosphocoenzyme A to form coenzyme A. In Salmonella choleraesuis (strain SC-B67), this protein is Dephospho-CoA kinase.